Consider the following 299-residue polypeptide: Diaminopimelate epimerase (299 aa).

Substrate is bound by residues asparagine 11 and asparagine 63. Residue cysteine 72 is the Proton donor of the active site. Substrate is bound by residues 73–74, asparagine 211, and 229–230; these read GN and ER. Residue cysteine 238 is the Proton acceptor of the active site. A substrate-binding site is contributed by 239–240; the sequence is GT.

This sequence belongs to the diaminopimelate epimerase family. Homodimer.

Its subcellular location is the cytoplasm. It catalyses the reaction (2S,6S)-2,6-diaminopimelate = meso-2,6-diaminopimelate. The protein operates within amino-acid biosynthesis; L-lysine biosynthesis via DAP pathway; DL-2,6-diaminopimelate from LL-2,6-diaminopimelate: step 1/1. Catalyzes the stereoinversion of LL-2,6-diaminopimelate (L,L-DAP) to meso-diaminopimelate (meso-DAP), a precursor of L-lysine and an essential component of the bacterial peptidoglycan. This Natranaerobius thermophilus (strain ATCC BAA-1301 / DSM 18059 / JW/NM-WN-LF) protein is Diaminopimelate epimerase.